A 385-amino-acid chain; its full sequence is Succinate--CoA ligase [ADP-forming] subunit beta (385 aa).

One can recognise an ATP-grasp domain in the interval 9-241 (KELLRDFGIN…IDEEEPSELE (233 aa)). ATP-binding positions include Lys46, 53 to 55 (GRG), Glu99, Thr102, and Glu107. Asn196 and Asp210 together coordinate Mg(2+). Residues Asn261 and 318-320 (GIV) each bind substrate.

Belongs to the succinate/malate CoA ligase beta subunit family. In terms of assembly, heterotetramer of two alpha and two beta subunits. Mg(2+) is required as a cofactor.

The catalysed reaction is succinate + ATP + CoA = succinyl-CoA + ADP + phosphate. The enzyme catalyses GTP + succinate + CoA = succinyl-CoA + GDP + phosphate. Its pathway is carbohydrate metabolism; tricarboxylic acid cycle; succinate from succinyl-CoA (ligase route): step 1/1. In terms of biological role, succinyl-CoA synthetase functions in the citric acid cycle (TCA), coupling the hydrolysis of succinyl-CoA to the synthesis of either ATP or GTP and thus represents the only step of substrate-level phosphorylation in the TCA. The beta subunit provides nucleotide specificity of the enzyme and binds the substrate succinate, while the binding sites for coenzyme A and phosphate are found in the alpha subunit. The protein is Succinate--CoA ligase [ADP-forming] subunit beta of Campylobacter fetus subsp. fetus (strain 82-40).